Reading from the N-terminus, the 1159-residue chain is RNA-directed RNA polymerase (1159 aa).

Positions 545 to 727 (LTYGVLAEDT…KALASYTGLE (183 aa)) constitute a RdRp catalytic domain.

Belongs to the reoviridae RNA-directed RNA polymerase family. As to quaternary structure, interacts with VP3 (Potential). Interacts with VP2 (Potential). Interacts with NSP5; this interaction is probably necessary for the formation of functional virus factories.

The protein resides in the virion. The enzyme catalyses RNA(n) + a ribonucleoside 5'-triphosphate = RNA(n+1) + diphosphate. RNA-directed RNA polymerase that is involved in both transcription and genome replication. Together with VP3 capping enzyme, forms an enzyme complex positioned near the channels situated at each of the five-fold vertices of the core. Following infection, the outermost layer of the virus is lost, leaving a double-layered particle (DLP) made up of the core and VP6 shell. VP1 then catalyzes the transcription of fully conservative plus-strand genomic RNAs that are extruded through the DLP's channels into the cytoplasm where they function as mRNAs for translation of viral proteins. One copy of each of the viral (+)RNAs is also recruited during core assembly, together with newly synthesized polymerase complexes and VP2. The polymerase of these novo-formed particles catalyzes the synthesis of complementary minus-strands leading to dsDNA formation. To do so, the polymerase specifically recognizes conserved 3' sequence(s) in plus-strand RNA templates. Once dsRNA synthesis is complete, the polymerase switches to the transcriptional mode, thus providing secondary transcription. The chain is RNA-directed RNA polymerase from Homo sapiens (Human).